A 995-amino-acid polypeptide reads, in one-letter code: uncharacterized protein (995 aa).

The signal sequence occupies residues 1–30 (MFIHRMKSNLASLFLSFFLLLACEFTFSYA). Residues Asn-115, Asn-162, Asn-225, Asn-422, Asn-478, and Asn-486 are each glycosylated (N-linked (GlcNAc...) asparagine). Glu-502 is an active-site residue. N-linked (GlcNAc...) asparagine glycans are attached at residues Asn-546 and Asn-611. Asp-669 acts as the Proton donor in catalysis. Residues Asn-670, Asn-823, Asn-843, and Asn-986 are each glycosylated (N-linked (GlcNAc...) asparagine).

The protein belongs to the glycosyl hydrolase 31 family.

The protein localises to the spore wall. This is an uncharacterized protein from Schizosaccharomyces pombe (strain 972 / ATCC 24843) (Fission yeast).